Consider the following 92-residue polypeptide: Phenol 2-monooxygenase, auxiliary component DmpK (92 aa).

As to quaternary structure, homotrimer or homotetramer. Interacts with the phenol hydroxylase components DmpL (P1 component) and DmpN (P3 component).

It participates in aromatic compound metabolism; phenol degradation. In terms of biological role, dmpK is an auxiliary protein associated with the multicomponent phenol hydroxylase DmpLMNOP and it may be involved in the post-translational incorporation of iron into the oxygenase component of the phenol hydroxylase. Required for growth on phenol but not for in vitro phenol hydroxylase activity. The chain is Phenol 2-monooxygenase, auxiliary component DmpK from Pseudomonas sp. (strain CF600).